Here is a 1070-residue protein sequence, read N- to C-terminus: DNA-directed RNA polymerase subunit beta (1070 aa).

This sequence belongs to the RNA polymerase beta chain family. In terms of assembly, in plastids the minimal PEP RNA polymerase catalytic core is composed of four subunits: alpha, beta, beta', and beta''. When a (nuclear-encoded) sigma factor is associated with the core the holoenzyme is formed, which can initiate transcription.

It is found in the plastid. The protein resides in the chloroplast. The enzyme catalyses RNA(n) + a ribonucleoside 5'-triphosphate = RNA(n+1) + diphosphate. In terms of biological role, DNA-dependent RNA polymerase catalyzes the transcription of DNA into RNA using the four ribonucleoside triphosphates as substrates. In Solanum lycopersicum (Tomato), this protein is DNA-directed RNA polymerase subunit beta.